Reading from the N-terminus, the 778-residue chain is Arf-GAP with coiled-coil, ANK repeat and PH domain-containing protein 2 (778 aa).

Residues 1-226 (MKMTVDFEEC…MKDLGAQLDR (226 aa)) enclose the BAR domain. The PH domain occupies 266-361 (GIVMEGYLFK…WIKAVQTSIA (96 aa)). The segment at 371–391 (SEKLDKKSSPSTGSLDSGNES) is disordered. The span at 379-388 (SPSTGSLDSG) shows a compositional bias: polar residues. Phosphoserine occurs at positions 384 and 387. In terms of domain architecture, Arf-GAP spans 399-520 (ESALQRVQCI…KFVDKYSISL (122 aa)). The C4-type zinc-finger motif lies at 414–437 (CCDCGLADPRWASINLGITLCIEC). The residue at position 521 (S521) is a Phosphoserine. Residues 540-599 (SISKFGPGDQVRASAQSSVRSNDSGIQQSSDDGRESLPSTVSANSLYEPEGERQDSSMFL) are disordered. A compositionally biased stretch (polar residues) spans 552-569 (ASAQSSVRSNDSGIQQSS). Residues S581 and S584 each carry the phosphoserine modification. ANK repeat units follow at residues 640-669 (NKAT…NVNQ), 673-702 (QGRG…NQHA), and 706-735 (EGKD…NEEM). Residue Y742 is modified to Phosphotyrosine. Position 775 is a phosphoserine (S775).

In terms of assembly, interacts (via KANK domains) with RAB35 (GTP-bound form); the interaction is direct and probably recruits ACAP2 to membranes including plasma membrane. Interacts with MICALL1; the interaction is indirect through RAB35. In terms of tissue distribution, widely expressed. Highest level in lung.

The protein resides in the cell membrane. Its subcellular location is the endosome membrane. Its activity is regulated as follows. GAP activity stimulated by phosphatidylinositol 4,5-bisphosphate (PIP2) and phosphatidic acid. GTPase-activating protein (GAP) for ADP ribosylation factor 6 (ARF6). Doesn't show GAP activity for RAB35. In Homo sapiens (Human), this protein is Arf-GAP with coiled-coil, ANK repeat and PH domain-containing protein 2 (ACAP2).